Reading from the N-terminus, the 226-residue chain is Triosephosphate isomerase (226 aa).

13-15 (NFK) provides a ligand contact to substrate. H97 (electrophile) is an active-site residue. E145 acts as the Proton acceptor in catalysis. Residues I150, G185, and 206-207 (AS) contribute to the substrate site.

This sequence belongs to the triosephosphate isomerase family. In terms of assembly, homotetramer; dimer of dimers.

The protein localises to the cytoplasm. It carries out the reaction D-glyceraldehyde 3-phosphate = dihydroxyacetone phosphate. The protein operates within carbohydrate biosynthesis; gluconeogenesis. It participates in carbohydrate degradation; glycolysis; D-glyceraldehyde 3-phosphate from glycerone phosphate: step 1/1. In terms of biological role, involved in the gluconeogenesis. Catalyzes stereospecifically the conversion of dihydroxyacetone phosphate (DHAP) to D-glyceraldehyde-3-phosphate (G3P). This is Triosephosphate isomerase from Methanobacterium bryantii.